Here is a 202-residue protein sequence, read N- to C-terminus: Small ribosomal subunit protein bS20c (202 aa).

The transit peptide at 1–79 (MATIVQCLSS…KPMRQLIVCE (79 aa)) directs the protein to the chloroplast. Residues 89–110 (SAAKRARQAEKRRVYNKSKKSE) are disordered.

Belongs to the bacterial ribosomal protein bS20 family. In terms of assembly, part of the 30S ribosomal subunit.

It is found in the plastid. Its subcellular location is the chloroplast. In terms of biological role, binds directly to 16S ribosomal RNA. This chain is Small ribosomal subunit protein bS20c (RPS20), found in Arabidopsis thaliana (Mouse-ear cress).